The sequence spans 133 residues: UPF0102 protein ABSDF1354 (133 aa).

The protein belongs to the UPF0102 family.

This Acinetobacter baumannii (strain SDF) protein is UPF0102 protein ABSDF1354.